The following is a 235-amino-acid chain: Purine nucleoside phosphorylase DeoD-type (235 aa).

Position 4 (His4) interacts with a purine D-ribonucleoside. Residues Gly20, Arg24, Arg43, and 87-90 (RVGT) contribute to the phosphate site. A purine D-ribonucleoside is bound by residues 178–180 (EME) and 202–203 (SD). The Proton donor role is filled by Asp203.

The protein belongs to the PNP/UDP phosphorylase family. In terms of assembly, homohexamer; trimer of homodimers.

It carries out the reaction a purine D-ribonucleoside + phosphate = a purine nucleobase + alpha-D-ribose 1-phosphate. The catalysed reaction is a purine 2'-deoxy-D-ribonucleoside + phosphate = a purine nucleobase + 2-deoxy-alpha-D-ribose 1-phosphate. Its function is as follows. Catalyzes the reversible phosphorolytic breakdown of the N-glycosidic bond in the beta-(deoxy)ribonucleoside molecules, with the formation of the corresponding free purine bases and pentose-1-phosphate. This Geobacillus sp. (strain WCH70) protein is Purine nucleoside phosphorylase DeoD-type.